The chain runs to 129 residues: Prefoldin subunit 6 (129 aa).

N-acetylalanine is present on Ala2. Residue Lys21 is modified to N6-acetyllysine. Lys66 is modified (N6-acetyllysine; alternate). Lys66 is covalently cross-linked (Glycyl lysine isopeptide (Lys-Gly) (interchain with G-Cter in SUMO1); alternate). A Glycyl lysine isopeptide (Lys-Gly) (interchain with G-Cter in SUMO2); alternate cross-link involves residue Lys66.

The protein belongs to the prefoldin subunit beta family. In terms of assembly, heterohexamer of two PFD-alpha type and four PFD-beta type subunits. Component of the PAQosome complex which is responsible for the biogenesis of several protein complexes and which consists of R2TP complex members RUVBL1, RUVBL2, RPAP3 and PIH1D1, URI complex members PFDN2, PFDN6, PDRG1, UXT and URI1 as well as ASDURF, POLR2E and DNAAF10/WDR92.

Its function is as follows. Binds specifically to cytosolic chaperonin (c-CPN) and transfers target proteins to it. Binds to nascent polypeptide chain and promotes folding in an environment in which there are many competing pathways for nonnative proteins. This chain is Prefoldin subunit 6 (PFDN6), found in Homo sapiens (Human).